We begin with the raw amino-acid sequence, 500 residues long: Probable malate:quinone oxidoreductase (500 aa).

It belongs to the MQO family. It depends on FAD as a cofactor.

It catalyses the reaction (S)-malate + a quinone = a quinol + oxaloacetate. It participates in carbohydrate metabolism; tricarboxylic acid cycle; oxaloacetate from (S)-malate (quinone route): step 1/1. This is Probable malate:quinone oxidoreductase from Bacillus cytotoxicus (strain DSM 22905 / CIP 110041 / 391-98 / NVH 391-98).